A 418-amino-acid chain; its full sequence is Gamma-glutamyl phosphate reductase (418 aa).

Belongs to the gamma-glutamyl phosphate reductase family.

The protein localises to the cytoplasm. It carries out the reaction L-glutamate 5-semialdehyde + phosphate + NADP(+) = L-glutamyl 5-phosphate + NADPH + H(+). It participates in amino-acid biosynthesis; L-proline biosynthesis; L-glutamate 5-semialdehyde from L-glutamate: step 2/2. Catalyzes the NADPH-dependent reduction of L-glutamate 5-phosphate into L-glutamate 5-semialdehyde and phosphate. The product spontaneously undergoes cyclization to form 1-pyrroline-5-carboxylate. The chain is Gamma-glutamyl phosphate reductase from Parafrankia sp. (strain EAN1pec).